Consider the following 346-residue polypeptide: Ribonucleoside-diphosphate reductase subunit beta (346 aa).

3 residues coordinate Fe cation: Glu-89, Glu-120, and His-123. Tyr-129 is an active-site residue. 3 residues coordinate Fe cation: Glu-193, Glu-227, and His-230.

It belongs to the ribonucleoside diphosphate reductase small chain family. As to quaternary structure, tetramer of two alpha and two beta subunits. It depends on Fe cation as a cofactor.

It catalyses the reaction a 2'-deoxyribonucleoside 5'-diphosphate + [thioredoxin]-disulfide + H2O = a ribonucleoside 5'-diphosphate + [thioredoxin]-dithiol. Its function is as follows. Provides the precursors necessary for DNA synthesis. Catalyzes the biosynthesis of deoxyribonucleotides from the corresponding ribonucleotides. This chain is Ribonucleoside-diphosphate reductase subunit beta (nrdB), found in Chlamydia pneumoniae (Chlamydophila pneumoniae).